A 270-amino-acid polypeptide reads, in one-letter code: DNA repair protein RecO (270 aa).

This sequence belongs to the RecO family.

Functionally, involved in DNA repair and RecF pathway recombination. The sequence is that of DNA repair protein RecO from Synechococcus sp. (strain WH7803).